The following is a 273-amino-acid chain: Putative phosphoenolpyruvate synthase regulatory protein (273 aa).

Residue 153–160 coordinates ADP; it reads GVSRCGKT.

This sequence belongs to the pyruvate, phosphate/water dikinase regulatory protein family. PSRP subfamily.

It catalyses the reaction [pyruvate, water dikinase] + ADP = [pyruvate, water dikinase]-phosphate + AMP + H(+). It carries out the reaction [pyruvate, water dikinase]-phosphate + phosphate + H(+) = [pyruvate, water dikinase] + diphosphate. Its function is as follows. Bifunctional serine/threonine kinase and phosphorylase involved in the regulation of the phosphoenolpyruvate synthase (PEPS) by catalyzing its phosphorylation/dephosphorylation. This Sodalis glossinidius (strain morsitans) protein is Putative phosphoenolpyruvate synthase regulatory protein.